The sequence spans 165 residues: Destrin (165 aa).

At Ala-2 the chain carries N-acetylalanine. A Phosphoserine modification is found at Ser-3. Residues Gly-4–Gly-153 enclose the ADF-H domain. At Lys-19 the chain carries N6-acetyllysine. The Nuclear localization signal motif lies at Lys-30–Lys-34.

It belongs to the actin-binding proteins ADF family. Post-translationally, ISGylated.

In terms of biological role, actin-depolymerizing protein. Severs actin filaments (F-actin) and binds to actin monomers (G-actin). Acts in a pH-independent manner. The polypeptide is Destrin (Dstn) (Rattus norvegicus (Rat)).